The primary structure comprises 1058 residues: Non-canonical non-ribosomal peptide synthetase FUB8 (1058 aa).

Residues 43–365 form an adenylation (A) domain region; sequence EISRDEPDRV…LASVVMHPDE (323 aa). Positions 566 to 643 constitute a Carrier domain; that stretch reads TTEDVVRSGI…QLSHSVWTHL (78 aa). An O-(pantetheine 4'-phosphoryl)serine modification is found at S601. The tract at residues 680-921 is thioester reductase (TR) domain; it reads LTGTTGEIGS…IPIDLLAEVI (242 aa).

It functions in the pathway mycotoxin biosynthesis. Non-canonical non-ribosomal peptide synthetase; part of the gene cluster that mediates the biosynthesis of fusaric acid, a mycotoxin with low to moderate toxicity to animals and humans, but with high phytotoxic properties. L-aspartate is suggested as fusaric acid amino acid precursor that is activated and further processed to O-acetyl-L-homoserine by cluster enzymes aspartate kinase FUB3 and homoserine O-acetyltransferase FUB5, as well as enzymes of the primary metabolism. The polyketide synthase (PKS) FUB1 generates the triketide trans-2-hexenal which is presumptively released by the hydrolase FUB4 and linked to the NRPS-bound amino acid precursor by NAD(P)-dependent dehydrogenase FUB6. FUB1, FUB4, and the non-canonical NRPS Fub8 may form an enzyme complex. Further processing of the NRPS-bound intermediate might be carried out by FUB6 and the sulfhydrylase FUB7, enabling a spontaneous electrocyclization to close the carbon backbone of fusaric acid. Dihydrofusaric acid is likely to be released via reduction by the thioester reductase (TR) domain of FUB8 whereupon the final oxidation to fusaric acid may (also) be performed by the FMN-dependent dehydrogenase FUB9. The sequence is that of Non-canonical non-ribosomal peptide synthetase FUB8 from Gibberella moniliformis (strain M3125 / FGSC 7600) (Maize ear and stalk rot fungus).